A 419-amino-acid polypeptide reads, in one-letter code: Pyrophosphate--fructose 6-phosphate 1-phosphotransferase (419 aa).

A diphosphate-binding site is contributed by glycine 12. Aspartate 107 serves as a coordination point for Mg(2+). Residues 132–134 (TID), 178–180 (MGR), glutamate 238, and 300–303 (YELR) contribute to the substrate site. The active-site Proton acceptor is the aspartate 134.

This sequence belongs to the phosphofructokinase type A (PFKA) family. PPi-dependent PFK group II subfamily. Clade 'Short' sub-subfamily. As to quaternary structure, homodimer. Requires Mg(2+) as cofactor. The cofactor is Co(2+). Mn(2+) is required as a cofactor. It depends on Ni(2+) as a cofactor.

The protein resides in the cytoplasm. The enzyme catalyses beta-D-fructose 6-phosphate + diphosphate = beta-D-fructose 1,6-bisphosphate + phosphate + H(+). It participates in carbohydrate degradation; glycolysis; D-glyceraldehyde 3-phosphate and glycerone phosphate from D-glucose: step 3/4. Non-allosteric. Its function is as follows. Catalyzes the phosphorylation of D-fructose 6-phosphate, the first committing step of glycolysis. Uses inorganic phosphate (PPi) as phosphoryl donor instead of ATP like common ATP-dependent phosphofructokinases (ATP-PFKs), which renders the reaction reversible, and can thus function both in glycolysis and gluconeogenesis. Consistently, PPi-PFK can replace the enzymes of both the forward (ATP-PFK) and reverse (fructose-bisphosphatase (FBPase)) reactions. This is Pyrophosphate--fructose 6-phosphate 1-phosphotransferase from Thermotoga maritima (strain ATCC 43589 / DSM 3109 / JCM 10099 / NBRC 100826 / MSB8).